Here is a 376-residue protein sequence, read N- to C-terminus: 2-hydroxypropyl-CoM lyase (376 aa).

Zn(2+) contacts are provided by H218, C220, and C341.

The protein belongs to the vitamin-B12 independent methionine synthase family. In terms of assembly, homohexamer. Component I of the aliphatic epoxide carboxylation complex together with components II, III and IV. Zn(2+) serves as cofactor.

The catalysed reaction is (R)-2-hydroxypropyl-coenzyme M = (R)-1,2-epoxypropane + coenzyme M. It carries out the reaction (S)-2-hydroxypropyl-coenzyme M = (S)-1,2-epoxypropane + coenzyme M. It functions in the pathway alkene metabolism; propylene degradation. With respect to regulation, inhibited by methylepoxypropane. Inhibited by the zinc chelator 4-(2-pyridylazo)resorcinol (PAR), in the presence of p- (hydroxymercuri)benzenesulfonic acid (PMPS), and by EDTA. Not inhibited by the coenzyme M analog 2-bromoethanesulfonate (BES). Its function is as follows. Involved in aliphatic epoxide carboxylation. Catalyzes the addition of coenzyme M (CoM) to either R- or S-epoxypropane to form the thioether conjugate 2-hydroxypropyl-CoM. Catalyzes the reaction of CoM with R-epoxypropane at a rate approximately twice of that with S-epoxypropane. The CoM analogs 2-mercaptopropionate, 2-mercaptoethanol and cysteine substitute poorly for CoM as the thiol substrate. In Xanthobacter autotrophicus (strain ATCC BAA-1158 / Py2), this protein is 2-hydroxypropyl-CoM lyase.